The following is a 236-amino-acid chain: LHFPL tetraspan subfamily member 3 protein (236 aa).

Helical transmembrane passes span 36-56, 110-130, 140-160, and 191-211; these read IGVL…VCFI, FFIG…TLFF, ICAW…MIFP, and ILAI…FVLG.

This sequence belongs to the LHFP family.

It localises to the membrane. The sequence is that of LHFPL tetraspan subfamily member 3 protein from Homo sapiens (Human).